The following is a 261-amino-acid chain: tRNA pseudouridine synthase A (261 aa).

Asp-51 (nucleophile) is an active-site residue. Tyr-109 contributes to the substrate binding site.

Belongs to the tRNA pseudouridine synthase TruA family. In terms of assembly, homodimer.

The enzyme catalyses uridine(38/39/40) in tRNA = pseudouridine(38/39/40) in tRNA. Its function is as follows. Formation of pseudouridine at positions 38, 39 and 40 in the anticodon stem and loop of transfer RNAs. This chain is tRNA pseudouridine synthase A, found in Haemophilus ducreyi (strain 35000HP / ATCC 700724).